The following is a 189-amino-acid chain: Probable nicotinate-nucleotide adenylyltransferase (189 aa).

It belongs to the NadD family.

The catalysed reaction is nicotinate beta-D-ribonucleotide + ATP + H(+) = deamido-NAD(+) + diphosphate. It participates in cofactor biosynthesis; NAD(+) biosynthesis; deamido-NAD(+) from nicotinate D-ribonucleotide: step 1/1. Catalyzes the reversible adenylation of nicotinate mononucleotide (NaMN) to nicotinic acid adenine dinucleotide (NaAD). The protein is Probable nicotinate-nucleotide adenylyltransferase of Bacillus pumilus (strain SAFR-032).